Consider the following 243-residue polypeptide: Carboxy-S-adenosyl-L-methionine synthase (243 aa).

S-adenosyl-L-methionine contacts are provided by residues tyrosine 35, 68–70 (GCS), 92–93 (DN), and arginine 199.

It belongs to the class I-like SAM-binding methyltransferase superfamily. Cx-SAM synthase family. Homodimer.

It catalyses the reaction prephenate + S-adenosyl-L-methionine = carboxy-S-adenosyl-L-methionine + 3-phenylpyruvate + H2O. In terms of biological role, catalyzes the conversion of S-adenosyl-L-methionine (SAM) to carboxy-S-adenosyl-L-methionine (Cx-SAM). In Helicobacter pylori (strain J99 / ATCC 700824) (Campylobacter pylori J99), this protein is Carboxy-S-adenosyl-L-methionine synthase.